A 555-amino-acid polypeptide reads, in one-letter code: Potassium-transporting ATPase potassium-binding subunit (555 aa).

The next 10 membrane-spanning stretches (helical) occupy residues 2–22 (IWVAVIITMLLFILVAKPTGV), 60–80 (QYALSLVLLNGFMIVVVYFIF), 130–150 (IGITFLMFAAPATTLALVMAF), 173–193 (VFLPIAFIAALVFVALGVPQT), 246–266 (MSNILQMMLMMLLPTALPFTY), 278–298 (ILFVSLFMVFLLGFITITTSE), 374–394 (AGFVNIIMYAIIAVFISGLMV), 412–432 (LIAVTILFHPLLILGFSALAL), 483–503 (LVMFLGRYFSLITMLAVAASL), and 525–545 (GIFIGTIVIVGALTFFPMLVL).

It belongs to the KdpA family. As to quaternary structure, the system is composed of three essential subunits: KdpA, KdpB and KdpC.

The protein resides in the cell membrane. Part of the high-affinity ATP-driven potassium transport (or Kdp) system, which catalyzes the hydrolysis of ATP coupled with the electrogenic transport of potassium into the cytoplasm. This subunit binds the extracellular potassium ions and delivers the ions to the membrane domain of KdpB through an intramembrane tunnel. The protein is Potassium-transporting ATPase potassium-binding subunit of Bacillus cereus (strain B4264).